The primary structure comprises 209 residues: Small ribosomal subunit protein uS4 (209 aa).

One can recognise an S4 RNA-binding domain in the interval threonine 99–leucine 164.

The protein belongs to the universal ribosomal protein uS4 family. As to quaternary structure, part of the 30S ribosomal subunit. Contacts protein S5. The interaction surface between S4 and S5 is involved in control of translational fidelity.

Functionally, one of the primary rRNA binding proteins, it binds directly to 16S rRNA where it nucleates assembly of the body of the 30S subunit. In terms of biological role, with S5 and S12 plays an important role in translational accuracy. This is Small ribosomal subunit protein uS4 from Natranaerobius thermophilus (strain ATCC BAA-1301 / DSM 18059 / JW/NM-WN-LF).